Consider the following 524-residue polypeptide: Alkaline phosphatase, tissue-nonspecific isozyme (524 aa).

A signal peptide spans 1–17; the sequence is MISPFLVLAIGTCLTNS. Asp-60 contacts Mg(2+). Zn(2+)-binding residues include Asp-60 and Ser-110. Ser-110 functions as the Phosphoserine intermediate in the catalytic mechanism. At Ser-110 the chain carries Phosphoserine. A disulfide bridge connects residues Cys-139 and Cys-201. An N-linked (GlcNAc...) asparagine glycan is attached at Asn-140. Thr-173 contributes to the Mg(2+) binding site. A glycan (N-linked (GlcNAc...) asparagine) is linked at Asn-230. Glu-235 contacts Ca(2+). Asn-271 carries N-linked (GlcNAc...) asparagine glycosylation. Phe-290 and Glu-291 together coordinate Ca(2+). Asn-303 is a glycosylation site (N-linked (GlcNAc...) asparagine). Residue Asp-306 coordinates Ca(2+). Glu-332 serves as a coordination point for Mg(2+). Zn(2+) is bound by residues Asp-337, His-341, Asp-378, and His-379. Residue Asn-430 is glycosylated (N-linked (GlcNAc...) asparagine). His-454 contacts Zn(2+). Cys-489 and Cys-497 are oxidised to a cystine. Ser-501 carries GPI-anchor amidated serine lipidation. Positions 502-524 are cleaved as a propeptide — removed in mature form; sequence SAGSLAAGPLLLALALYPLSVLF.

Belongs to the alkaline phosphatase family. In terms of assembly, homodimer. It depends on Mg(2+) as a cofactor. Zn(2+) is required as a cofactor. Ca(2+) serves as cofactor. In terms of processing, N-glycosylated.

It localises to the cell membrane. The protein localises to the extracellular vesicle membrane. It is found in the mitochondrion membrane. Its subcellular location is the mitochondrion intermembrane space. It catalyses the reaction a phosphate monoester + H2O = an alcohol + phosphate. It carries out the reaction diphosphate + H2O = 2 phosphate + H(+). The enzyme catalyses pyridoxal 5'-phosphate + H2O = pyridoxal + phosphate. The catalysed reaction is phosphoethanolamine + H2O = ethanolamine + phosphate. It catalyses the reaction N-phosphocreatine + H2O = creatine + phosphate. It carries out the reaction ATP + H2O = ADP + phosphate + H(+). The enzyme catalyses ADP + H2O = AMP + phosphate + H(+). The catalysed reaction is AMP + H2O = adenosine + phosphate. Phosphatase activity is specifically inhibited by 5-((5-chloro-2-methoxyphenyl)sulfonamido)nicotinamide (SBI-425). In terms of biological role, alkaline phosphatase that metabolizes various phosphate compounds and plays a key role in skeletal mineralization and adaptive thermogenesis. Has broad substrate specificity and can hydrolyze a considerable variety of compounds: however, only a few substrates, such as diphosphate (inorganic pyrophosphate; PPi), pyridoxal 5'-phosphate (PLP) and N-phosphocreatine are natural substrates. Plays an essential role in skeletal and dental mineralization via its ability to hydrolyze extracellular diphosphate, a potent mineralization inhibitor, to phosphate: it thereby promotes hydroxyapatite crystal formation and increases inorganic phosphate concentration. Acts in a non-redundant manner with PHOSPHO1 in skeletal mineralization: while PHOSPHO1 mediates the initiation of hydroxyapatite crystallization in the matrix vesicles (MVs), ALPL/TNAP catalyzes the spread of hydroxyapatite crystallization in the extracellular matrix. Also promotes dephosphorylation of osteopontin (SSP1), an inhibitor of hydroxyapatite crystallization in its phosphorylated state; it is however unclear whether ALPL/TNAP mediates SSP1 dephosphorylation via a direct or indirect manner. Catalyzes dephosphorylation of PLP to pyridoxal (PL), the transportable form of vitamin B6, in order to provide a sufficient amount of PLP in the brain, an essential cofactor for enzymes catalyzing the synthesis of diverse neurotransmitters. Additionally, also able to mediate ATP degradation in a stepwise manner to adenosine, thereby regulating the availability of ligands for purinergic receptors. Also capable of dephosphorylating microbial products, such as lipopolysaccharides (LPS) as well as other phosphorylated small-molecules, such as poly-inosine:cytosine (poly I:C). Acts as a key regulator of adaptive thermogenesis as part of the futile creatine cycle: localizes to the mitochondria of thermogenic fat cells and acts by mediating hydrolysis of N-phosphocreatine to initiate a futile cycle of creatine dephosphorylation and phosphorylation. During the futile creatine cycle, creatine and N-phosphocreatine are in a futile cycle, which dissipates the high energy charge of N-phosphocreatine as heat without performing any mechanical or chemical work. The chain is Alkaline phosphatase, tissue-nonspecific isozyme from Homo sapiens (Human).